We begin with the raw amino-acid sequence, 520 residues long: Keratin, type II cytoskeletal 8 (520 aa).

Residues 1–19 (MSTYSKKTSYTVKSSSSGS) show a composition bias toward low complexity. Positions 1–20 (MSTYSKKTSYTVKSSSSGSI) are disordered. A head region spans residues 2 to 114 (STYSKKTSYT…DPNIQIVRTQ (113 aa)). S28 bears the Phosphoserine mark. A coil 1A region spans residues 115–150 (EKEQIKTLNNRFASFIDKVRFLEQQNKMLETKWSLL). In terms of domain architecture, IF rod spans 115–426 (EKEQIKTLNN…KLLEGEEDRL (312 aa)). Residues 151-166 (QNQTATRSNIDAMFEA) form a linker 1 region. Residues 168 to 259 (IANLRRQLDS…QIFEEEIREL (92 aa)) are coil 1B. A linker 12 region spans residues 260-283 (QSQIKDTSVVVEMDNSRNLDMDAI). Residues 284–422 (VAEVRAQYED…ATYRKLLEGE (139 aa)) are coil 2. The tail stretch occupies residues 423-520 (EDRLATGIKA…VSESSEVVQD (98 aa)).

Belongs to the intermediate filament family. As to quaternary structure, heterotetramer of two type I and two type II keratins. Keratin-8 associates with keratin-18. As to expression, expressed in simple epithelia.

It is found in the cytoplasm. It localises to the nucleus. The protein resides in the nucleoplasm. The protein localises to the nucleus matrix. Its function is as follows. Together with KRT19, helps to link the contractile apparatus to dystrophin at the costameres of striated muscle. The chain is Keratin, type II cytoskeletal 8 from Danio rerio (Zebrafish).